The sequence spans 465 residues: Mothers against decapentaplegic homolog 5 (465 aa).

Thr-2 is subject to N-acetylthreonine. An MH1 domain is found at 13-137 (PAVKRLLGWK…YKRVESPVLP (125 aa)). Cys-65, Cys-110, Cys-122, and His-127 together coordinate Zn(2+). Residues 163 to 249 (NEPHMPQNAT…PMDTSNNMIP (87 aa)) are disordered. Residues 169 to 182 (QNATFPDSFHQPNN) show a composition bias toward polar residues. The span at 186–197 (PLSPNSPYPPSP) shows a compositional bias: pro residues. Over residues 198–214 (ASSTYPNSPASSGPGSP) the composition is skewed to low complexity. The segment covering 234–249 (GQDNSQPMDTSNNMIP) has biased composition (polar residues). In terms of domain architecture, MH2 spans 271 to 465 (WCSIVYYELN…SPLNPISSVS (195 aa)). Phosphoserine is present on residues Ser-463 and Ser-465.

It belongs to the dwarfin/SMAD family. In terms of assembly, homodimer. Forms trimers with the co-SMAD SMAD4. Interacts with PEBP2-alpha subunit and SMURF1. Interacts with SUV39H1 and SUV39H2. Interacts (via MH2 domain) with LEMD3. Interacts with WWP1. Interacts with TMEM119. Interacts with ZNF8. Interacts with RANBP3L. Interacts with HK1. Interacts with HGS; this interaction attenuates BMP signaling. In terms of processing, phosphorylated on serine by BMP (bone morphogenetic proteins) type 1 receptor kinase. Post-translationally, ubiquitin-mediated proteolysis by SMAD-specific E3 ubiquitin ligase SMURF1. As to expression, ubiquitous.

It localises to the cytoplasm. It is found in the nucleus. The protein resides in the mitochondrion. Its function is as follows. Transcriptional regulator that plays a role in various cellular processes including embryonic development, cell differentiation, angiogenesis and tissue homeostasis. Upon BMP ligand binding to their receptors at the cell surface, is phosphorylated by activated type I BMP receptors (BMPRIs) and associates with SMAD4 to form a heteromeric complex which translocates into the nucleus acting as transcription factor. In turn, the hetero-trimeric complex recognizes cis-regulatory elements containing Smad Binding Elements (SBEs) to modulate the outcome of the signaling network. Non-phosphorylated SMAD5 has a cytoplasmic role in energy metabolism regulation by promoting mitochondrial respiration and glycolysis in response to cytoplasmic pH changes. Mechanistically, interacts with hexokinase 1/HK1 and thereby accelerates glycolysis. In Homo sapiens (Human), this protein is Mothers against decapentaplegic homolog 5 (SMAD5).